Here is a 169-residue protein sequence, read N- to C-terminus: Putative adenylate kinase (169 aa).

Positions 10, 12, 13, 14, and 15 each coordinate ATP. Positions 28-51 (HLNDLVGTEGLYDGVDADRGSKIV) are NMP. The LID stretch occupies residues 98 to 108 (DRGDSPEKAAE). Arginine 99 contributes to the ATP binding site.

This sequence belongs to the adenylate kinase family. AK6 subfamily. In terms of assembly, interacts with uS11. Not a structural component of 40S pre-ribosomes, but transiently interacts with them by binding to uS11.

The enzyme catalyses AMP + ATP = 2 ADP. The catalysed reaction is ATP + H2O = ADP + phosphate + H(+). In terms of biological role, broad-specificity nucleoside monophosphate (NMP) kinase that catalyzes the reversible transfer of the terminal phosphate group between nucleoside triphosphates and monophosphates. Also has ATPase activity. Involved in the late maturation steps of the 30S ribosomal particles, specifically 16S rRNA maturation. While NMP activity is not required for ribosome maturation, ATPase activity is. Associates transiently with small ribosomal subunit protein uS11. ATP hydrolysis breaks the interaction with uS11. May temporarily remove uS11 from the ribosome to enable a conformational change of the ribosomal RNA that is needed for the final maturation step of the small ribosomal subunit. This chain is Putative adenylate kinase, found in Halobacterium salinarum (strain ATCC 29341 / DSM 671 / R1).